Here is an 86-residue protein sequence, read N- to C-terminus: Large ribosomal subunit protein eL20 (86 aa).

Belongs to the eukaryotic ribosomal protein eL20 family. In terms of assembly, part of the 50S ribosomal subunit. Binds 23S rRNA.

In Saccharolobus solfataricus (strain ATCC 35092 / DSM 1617 / JCM 11322 / P2) (Sulfolobus solfataricus), this protein is Large ribosomal subunit protein eL20.